The sequence spans 143 residues: Large ribosomal subunit protein uL16 (143 aa).

Belongs to the universal ribosomal protein uL16 family. In terms of assembly, part of the 50S ribosomal subunit.

Functionally, binds 23S rRNA and is also seen to make contacts with the A and possibly P site tRNAs. In Thermosynechococcus vestitus (strain NIES-2133 / IAM M-273 / BP-1), this protein is Large ribosomal subunit protein uL16.